A 201-amino-acid polypeptide reads, in one-letter code: Recombination protein RecR (201 aa).

The C4-type zinc-finger motif lies at 57–72 (CADCRTFTEQEVCNIC). The region spanning 81–176 (GQICVVESPA…EASRIAHGVP (96 aa)) is the Toprim domain.

The protein belongs to the RecR family.

Functionally, may play a role in DNA repair. It seems to be involved in an RecBC-independent recombinational process of DNA repair. It may act with RecF and RecO. This is Recombination protein RecR from Escherichia coli O17:K52:H18 (strain UMN026 / ExPEC).